A 52-amino-acid polypeptide reads, in one-letter code: Dibenzothiophene metabolism operon protein NahQ/DoxH (52 aa).

It functions in the pathway aromatic compound metabolism; naphthalene degradation. In terms of biological role, may be involved in the conversion of 2-hydroxy-4-(2'-oxo-3,5-cyclohexadienyl)-buta-2,4-dienoate to cis-O-hydroxybenzylidenepyruvate. DoxH and DoxJ encode different enzymes that may have interchangeable functions. This chain is Dibenzothiophene metabolism operon protein NahQ/DoxH (nahQ), found in Pseudomonas putida (Arthrobacter siderocapsulatus).